The following is a 419-amino-acid chain: GTPase Obg (419 aa).

The Obg domain maps to 1–158 (MFVDQARIFV…KWIRLELKLL (158 aa)). Residues 159-327 (ADVGLVGFPN…LMGKTYALLQ (169 aa)) form the OBG-type G domain. GTP contacts are provided by residues 165 to 172 (GFPNAGKS), 190 to 194 (FTTLV), 212 to 215 (DIPG), 282 to 285 (NKMD), and 308 to 310 (SAV). Residues S172 and T192 each coordinate Mg(2+). The OCT domain maps to 342–419 (RRFEEELPFK…IKDFEFEFTE (78 aa)).

The protein belongs to the TRAFAC class OBG-HflX-like GTPase superfamily. OBG GTPase family. As to quaternary structure, monomer. The cofactor is Mg(2+).

It is found in the cytoplasm. Its function is as follows. An essential GTPase which binds GTP, GDP and possibly (p)ppGpp with moderate affinity, with high nucleotide exchange rates and a fairly low GTP hydrolysis rate. Plays a role in control of the cell cycle, stress response, ribosome biogenesis and in those bacteria that undergo differentiation, in morphogenesis control. This Syntrophomonas wolfei subsp. wolfei (strain DSM 2245B / Goettingen) protein is GTPase Obg.